The chain runs to 164 residues: UPF0114 protein YqhA (164 aa).

The next 3 helical transmembrane spans lie at 10–32, 53–75, and 136–155; these read YASR…ALAL, LILV…MVMF, and LMWY…VMGY.

This sequence belongs to the UPF0114 family.

It localises to the cell membrane. The protein is UPF0114 protein YqhA of Salmonella typhi.